A 319-amino-acid polypeptide reads, in one-letter code: Ribonucleoside-diphosphate reductase small chain (319 aa).

Positions 313 to 319 (FSLDVDF) are interaction with R1.

This sequence belongs to the ribonucleoside diphosphate reductase small chain family. Interacts with RNR1/OPG080 subunit. Can interact with host RNR1 supunit. Fe cation serves as cofactor.

It carries out the reaction a 2'-deoxyribonucleoside 5'-diphosphate + [thioredoxin]-disulfide + H2O = a ribonucleoside 5'-diphosphate + [thioredoxin]-dithiol. Its function is as follows. Ribonucleoside-diphosphate reductase holoenzyme provides the precursors necessary for viral DNA synthesis. Allows virus growth in non-dividing cells. Catalyzes the biosynthesis of deoxyribonucleotides from the corresponding ribonucleotides. This chain is Ribonucleoside-diphosphate reductase small chain (OPG048), found in Cynomys gunnisoni (Gunnison's prairie dog).